The primary structure comprises 346 residues: Phosphoribosylformylglycinamidine cyclo-ligase (346 aa).

The protein belongs to the AIR synthase family.

It is found in the cytoplasm. The catalysed reaction is 2-formamido-N(1)-(5-O-phospho-beta-D-ribosyl)acetamidine + ATP = 5-amino-1-(5-phospho-beta-D-ribosyl)imidazole + ADP + phosphate + H(+). It functions in the pathway purine metabolism; IMP biosynthesis via de novo pathway; 5-amino-1-(5-phospho-D-ribosyl)imidazole from N(2)-formyl-N(1)-(5-phospho-D-ribosyl)glycinamide: step 2/2. The polypeptide is Phosphoribosylformylglycinamidine cyclo-ligase (Geobacillus thermodenitrificans (strain NG80-2)).